The sequence spans 209 residues: A-type ATP synthase subunit D (209 aa).

Belongs to the V-ATPase D subunit family. Has multiple subunits with at least A(3), B(3), C, D, E, F, H, I and proteolipid K(x).

It is found in the cell membrane. Its function is as follows. Component of the A-type ATP synthase that produces ATP from ADP in the presence of a proton gradient across the membrane. The chain is A-type ATP synthase subunit D from Archaeoglobus fulgidus (strain ATCC 49558 / DSM 4304 / JCM 9628 / NBRC 100126 / VC-16).